Here is a 402-residue protein sequence, read N- to C-terminus: Type II NADH:quinone oxidoreductase (402 aa).

FAD is bound by residues 12–16 (GAGYA), 39–40 (NK), and Val-83. The active site involves Glu-172. FAD contacts are provided by residues Asp-302, 319 to 320 (AQ), and Lys-379.

Belongs to the NADH dehydrogenase family. FAD is required as a cofactor.

The protein resides in the cell membrane. The enzyme catalyses a quinone + NADH + H(+) = a quinol + NAD(+). Its function is as follows. Alternative, nonproton pumping NADH:quinone oxidoreductase that delivers electrons to the respiratory chain by oxidation of NADH and reduction of quinones, and contributes to the regeneration of NAD(+). This is Type II NADH:quinone oxidoreductase from Staphylococcus aureus (strain MSSA476).